The chain runs to 162 residues: Probable chemoreceptor glutamine deamidase CheD (162 aa).

This sequence belongs to the CheD family.

It carries out the reaction L-glutaminyl-[protein] + H2O = L-glutamyl-[protein] + NH4(+). Functionally, probably deamidates glutamine residues to glutamate on methyl-accepting chemotaxis receptors (MCPs), playing an important role in chemotaxis. This chain is Probable chemoreceptor glutamine deamidase CheD, found in Clostridium botulinum (strain Eklund 17B / Type B).